The following is a 232-amino-acid chain: Large ribosomal subunit protein uL1 (232 aa).

This sequence belongs to the universal ribosomal protein uL1 family. As to quaternary structure, part of the 50S ribosomal subunit.

In terms of biological role, binds directly to 23S rRNA. The L1 stalk is quite mobile in the ribosome, and is involved in E site tRNA release. Protein L1 is also a translational repressor protein, it controls the translation of the L11 operon by binding to its mRNA. The sequence is that of Large ribosomal subunit protein uL1 from Chlamydia trachomatis serovar L2b (strain UCH-1/proctitis).